Reading from the N-terminus, the 302-residue chain is MGGNNDGVSGAACLKPLNGVSPTYVPSAGAGALYFLIGSGLGVVAVLHASGLAEVSGEWASAARWTEVSREWPSAARWAAQLAGSVGAQRLLLATSLLFLAVSVWRLARRCAAVEGRVGSTDSAVRALHVGGVVCAVCGSKIRALKRGCRGVERTRSVDSSKPVSRSLAAEFDQEADGEEEDNAGETSDPDDGSVQYLRRRLKEEMLLKEVALEELEKERHAAASAADEAMSKIACLRSEKALVEREARQFQEMMQQKQMYDRQVIESLQWVIMKSGMQGWEPEAITDRALSETSEDDRDKK.

A run of 2 helical transmembrane segments spans residues 27-47 and 82-102; these read SAGA…VAVL and LAGS…FLAV. The tract at residues 160–195 is disordered; it reads SSKPVSRSLAAEFDQEADGEEEDNAGETSDPDDGSV. The segment covering 172–192 has biased composition (acidic residues); that stretch reads FDQEADGEEEDNAGETSDPDD. Residues 193-299 enclose the GTD-binding domain; that stretch reads GSVQYLRRRL…ALSETSEDDR (107 aa). Positions 199 to 254 form a coiled coil; that stretch reads RRRLKEEMLLKEVALEELEKERHAAASAADEAMSKIACLRSEKALVEREARQFQEM. The segment at 283-302 is disordered; that stretch reads PEAITDRALSETSEDDRDKK.

In terms of assembly, interacts (via C-terminus) with both 22 kDa and 19 kDa alpha-zeins. Interacts (via C-terminus) with OP10 (via N-terminus). Expressed in endosperm. Not detected in embryo, leaves and roots.

The protein resides in the endoplasmic reticulum membrane. In terms of biological role, involved in protein body development and 22 kDa alpha-zein localization. This chain is Protein FLOURY 1, found in Zea mays (Maize).